The primary structure comprises 482 residues: BEL1-like homeodomain protein 7 (482 aa).

The tract at residues 118 to 134 is SR/KY domain; sequence SKYLKAAQELLDETVNV. The BELL domain stretch occupies residues 167-238; sequence ERQELQSKLS…CLRDAISGQI (72 aa). The homeobox DNA-binding region spans 285–347; it reads TWRPQRGLPD…NARVRLWKPM (63 aa). The tract at residues 358–401 is disordered; the sequence is DALQENDPNQSSENTPEITEIQELQTESSSNNGHVPGVASSSMR. Positions 363-401 are enriched in polar residues; sequence NDPNQSSENTPEITEIQELQTESSSNNGHVPGVASSSMR.

It belongs to the TALE/BELL homeobox family. May form heterodimeric complexes with TALE/KNOX proteins.

It is found in the nucleus. In Arabidopsis thaliana (Mouse-ear cress), this protein is BEL1-like homeodomain protein 7 (BLH7).